The following is a 446-amino-acid chain: Enolase (446 aa).

Mg(2+) is bound at residue Ser-42. Ser-42 is modified (phosphoserine). A Pentapeptide insert motif is present at residues Glu-104–Ser-108. Lys-133 is subject to N6-acetyllysine. Lys-138 is covalently cross-linked (Glycyl lysine isopeptide (Lys-Gly) (interchain with G-Cter in ubiquitin)). Tyr-139 is modified (phosphotyrosine). 2 residues coordinate substrate: His-166 and Glu-175. The active-site Proton donor is Glu-218. Asp-253 is a Mg(2+) binding site. The short motif at Asp-277–Lys-282 is the DKSLVK motif element. Residues Glu-304 and Asp-331 each contribute to the Mg(2+) site. Substrate-binding residues include Glu-304 and Asp-331. Thr-339 carries the post-translational modification Phosphothreonine. Lys-356 acts as the Proton acceptor in catalysis. Lys-375 is modified (N6-acetyllysine). Substrate-binding positions include Ser-383–Ser-386 and Lys-407.

The protein belongs to the enolase family. Homodimer. Forms a complex at least composed of DegP, ENO and HSP70. Interacts with G-actin. Interacts (via the DKSLVK motif) with mammalian host PLG/plasminogen (present in the mosquito blood meal); the interaction occurs at the ookinete cell surface and is required for ookinete invasion of the mosquito midgut. Interacts with A.gambiae EBP; depending on the Plasmodium species, the interaction is either involved in ookinete invasion of the mosquito midgut (P.berghei) or is dispensable (P.falciparum). The cofactor is Mg(2+).

Its subcellular location is the cytoplasm. It is found in the nucleus. The protein localises to the cytoskeleton. The protein resides in the cell surface. It localises to the cell membrane. Its subcellular location is the vacuole. It carries out the reaction (2R)-2-phosphoglycerate = phosphoenolpyruvate + H2O. The protein operates within carbohydrate degradation; glycolysis; pyruvate from D-glyceraldehyde 3-phosphate: step 4/5. Its function is as follows. Glycolytic enzyme that catalyzes the conversion of 2-phosphoglycerate to phosphoenolpyruvate. In addition to glycolysis, involved in various processes such as parasite development and invasion. Plays an essential role during ookinete invasion of the mosquito vector midgut by mediating the interaction of the ookinete with the midgut epithelium and, further, by binding to mammalian host plasminogen in the blood meal, whose conversion to active plasmin promotes the invasion process. In Plasmodium falciparum, this protein is Enolase.